The sequence spans 544 residues: D-2-hydroxyglutarate dehydrogenase, mitochondrial (544 aa).

The transit peptide at 1–10 (MMMPRLVPRW) directs the protein to the mitochondrion. The 180-residue stretch at 119-298 (VRGSSKVLLR…TAVSILCPPK (180 aa)) folds into the FAD-binding PCMH-type domain. K124 is modified (N6-succinyllysine). Residues R409, T413, and K424 each contribute to the (R)-2-hydroxyglutarate site. (R)-lactate is bound at residue R409. (R)-malate is bound by residues R409, T413, and K424. H457 and H464 together coordinate Zn(2+). A (R)-2-hydroxyglutarate-binding site is contributed by N466. E498 lines the Zn(2+) pocket. H499 contacts (R)-2-hydroxyglutarate. H499 contributes to the (R)-lactate binding site. H499 serves as a coordination point for (R)-malate.

Belongs to the FAD-binding oxidoreductase/transferase type 4 family. Requires FAD as cofactor.

The protein resides in the mitochondrion. It carries out the reaction (R)-2-hydroxyglutarate + A = 2-oxoglutarate + AH2. The enzyme catalyses (R)-malate + A = oxaloacetate + AH2. Activated by zinc and cobalt ions. Its function is as follows. Catalyzes the oxidation of D-2-hydroxyglutarate (D-2-HG) to alpha-ketoglutarate. Also catalyzes the oxidation of other D-2-hydroxyacids, such as D-malate (D-MAL) and D-lactate (D-LAC). Exhibits high activities towards D-2-HG and D-MAL but a very weak activity towards D-LAC. This is D-2-hydroxyglutarate dehydrogenase, mitochondrial (D2HGDH) from Bos taurus (Bovine).